Here is a 158-residue protein sequence, read N- to C-terminus: Pathogenesis-related protein 2 (158 aa).

It belongs to the BetVI family.

In Petroselinum crispum (Parsley), this protein is Pathogenesis-related protein 2 (PR2).